The chain runs to 260 residues: Adenosylcobinamide-GDP ribazoletransferase (260 aa).

6 helical membrane-spanning segments follow: residues 40–60 (AFPF…LLLL), 64–84 (ADPL…TGAL), 117–137 (YGAI…AAIV), 142–162 (PLAA…AITW), 189–209 (FALV…FGLW), and 210–230 (PLVA…VFIR).

Belongs to the CobS family. It depends on Mg(2+) as a cofactor.

The protein resides in the cell inner membrane. It carries out the reaction alpha-ribazole + adenosylcob(III)inamide-GDP = adenosylcob(III)alamin + GMP + H(+). It catalyses the reaction alpha-ribazole 5'-phosphate + adenosylcob(III)inamide-GDP = adenosylcob(III)alamin 5'-phosphate + GMP + H(+). Its pathway is cofactor biosynthesis; adenosylcobalamin biosynthesis; adenosylcobalamin from cob(II)yrinate a,c-diamide: step 7/7. In terms of biological role, joins adenosylcobinamide-GDP and alpha-ribazole to generate adenosylcobalamin (Ado-cobalamin). Also synthesizes adenosylcobalamin 5'-phosphate from adenosylcobinamide-GDP and alpha-ribazole 5'-phosphate. The protein is Adenosylcobinamide-GDP ribazoletransferase of Rhizobium etli (strain CIAT 652).